The primary structure comprises 204 residues: Guanylate kinase (204 aa).

Positions 6–184 (GLLIVLSGPA…AVDRIKAIVT (179 aa)) constitute a Guanylate kinase-like domain. An ATP-binding site is contributed by 13 to 20 (GPAGVGKG).

This sequence belongs to the guanylate kinase family.

It localises to the cytoplasm. The enzyme catalyses GMP + ATP = GDP + ADP. Essential for recycling GMP and indirectly, cGMP. In Halalkalibacterium halodurans (strain ATCC BAA-125 / DSM 18197 / FERM 7344 / JCM 9153 / C-125) (Bacillus halodurans), this protein is Guanylate kinase (gmk).